Reading from the N-terminus, the 532-residue chain is Probable calcium-binding mitochondrial carrier CBG00135 (532 aa).

EF-hand domains lie at 70 to 105 (EKEK…QTPH), 107 to 136 (PATM…NYVI), 137 to 172 (AHEA…MGVN), and 173 to 208 (LDDH…YPST). The Ca(2+) site is built by Asp-83, Asp-85, Asp-87, Ser-89, and Asp-94. Ca(2+) contacts are provided by Asp-150, Asn-152, Asp-154, Glu-156, and Glu-161. Solcar repeat units lie at residues 243–329 (GVWW…IKRW), 339–425 (LTTY…LKSC), and 436–526 (PGVL…VRKQ). A run of 6 helical transmembrane segments spans residues 249–266 (LVAG…TAPF), 304–323 (GNGI…FMSY), 349–362 (SSAG…IYPM), 400–419 (GYLP…LTVY), 442–459 (LACG…SYPL), and 501–518 (GITP…ISYV).

This sequence belongs to the mitochondrial carrier (TC 2.A.29) family.

Its subcellular location is the mitochondrion inner membrane. Functionally, calcium-dependent mitochondrial solute carrier. The sequence is that of Probable calcium-binding mitochondrial carrier CBG00135 from Caenorhabditis briggsae.